Here is a 234-residue protein sequence, read N- to C-terminus: DNA repair protein RecO (234 aa).

It belongs to the RecO family.

Functionally, involved in DNA repair and RecF pathway recombination. This Hamiltonella defensa subsp. Acyrthosiphon pisum (strain 5AT) protein is DNA repair protein RecO.